The chain runs to 199 residues: Ribonuclease HII (199 aa).

The RNase H type-2 domain occupies 13–199; the sequence is GLVAGVDEVG…FAPIAKILCG (187 aa). Asp-19, Glu-20, and Asp-110 together coordinate a divalent metal cation.

Belongs to the RNase HII family. The cofactor is Mn(2+). Mg(2+) is required as a cofactor.

It is found in the cytoplasm. It catalyses the reaction Endonucleolytic cleavage to 5'-phosphomonoester.. In terms of biological role, endonuclease that specifically degrades the RNA of RNA-DNA hybrids. The polypeptide is Ribonuclease HII (Jannaschia sp. (strain CCS1)).